The sequence spans 165 residues: MDPVNFIKTYAPRGSIIFINYAMSLTSHLNPSIEKHVGIYYGTLLSEHLVVESTYRKGVRIVPLDRFFEGYLSAKVYMLENIQVMKIAADMSLTLLGIPYGFGHDRMYCFKLVAECYKNAGIDTSSKRILGKDIFLSQNFTDDNRWIKIYDSNNLTFWQIDYLKG.

It belongs to the orthopoxvirus OPG091 family.

The protein resides in the virion. The protein localises to the host cytoplasm. Contributes to virulence in host but not to replication in cell culture. In Cynomys gunnisoni (Gunnison's prairie dog), this protein is Protein OPG091 (OPG091).